The following is a 178-amino-acid chain: Gamma-crystallin S (178 aa).

Residue S2 is modified to N-acetylserine. The interval 2 to 5 (SKTG) is N-terminal arm. 2 consecutive Beta/gamma crystallin 'Greek key' domains span residues 6–44 (GKIS…RVEG) and 45–87 (GTWA…RAVH). Residues 88–93 (LSSGGQ) form a connecting peptide region. Beta/gamma crystallin 'Greek key' domains are found at residues 94–134 (AKIQ…KVVE) and 135–177 (GTWI…RRIV).

This sequence belongs to the beta/gamma-crystallin family. Monomer.

Its function is as follows. Crystallins are the dominant structural components of the vertebrate eye lens. The chain is Gamma-crystallin S (Crygs) from Mus musculus (Mouse).